Here is a 42-residue protein sequence, read N- to C-terminus: Cytochrome b6-f complex subunit 7 (42 aa).

Residues 19 to 37 (AVVCFSMTLFGLSLGFGLL) traverse the membrane as a helical segment.

This sequence belongs to the PetM family. In terms of assembly, the 4 large subunits of the cytochrome b6-f complex are cytochrome b6, subunit IV (17 kDa polypeptide, PetD), cytochrome f and the Rieske protein, while the 4 small subunits are PetG, PetL, PetM and PetN. The complex functions as a dimer.

It is found in the plastid. Its subcellular location is the chloroplast thylakoid membrane. Functionally, component of the cytochrome b6-f complex, which mediates electron transfer between photosystem II (PSII) and photosystem I (PSI), cyclic electron flow around PSI, and state transitions. The protein is Cytochrome b6-f complex subunit 7 of Phaeodactylum tricornutum (strain CCAP 1055/1).